A 362-amino-acid chain; its full sequence is Stress response regulator protein 1 (362 aa).

Disordered stretches follow at residues 1-39 (MTRL…SLVQ) and 163-188 (TLKS…ETKT). Over residues 19 to 39 (PSQLLHSASLSSSPSSPSLVQ) the composition is skewed to low complexity. The region spanning 209-327 (KFLLVDDNLI…LDFMANVIDE (119 aa)) is the Response regulatory domain. The residue at position 260 (Asp260) is a 4-aspartylphosphate.

In terms of biological role, required for stress adaptation, morphogenesis and virulence. This chain is Stress response regulator protein 1 (SRR1), found in Lodderomyces elongisporus (strain ATCC 11503 / CBS 2605 / JCM 1781 / NBRC 1676 / NRRL YB-4239) (Yeast).